The primary structure comprises 208 residues: Cytidylate kinase (208 aa).

Residue 9–17 (GPSASGKSS) coordinates ATP.

The protein belongs to the cytidylate kinase family. Type 1 subfamily.

The protein resides in the cytoplasm. It catalyses the reaction CMP + ATP = CDP + ADP. The enzyme catalyses dCMP + ATP = dCDP + ADP. This chain is Cytidylate kinase, found in Thermus thermophilus (strain ATCC BAA-163 / DSM 7039 / HB27).